We begin with the raw amino-acid sequence, 68 residues long: Conotoxin Vx2 (68 aa).

Positions 1 to 20 (MMSKLGVLVTICLLLFPLTA) are cleaved as a signal peptide. A propeptide spanning residues 21–47 (LPLDGDQPADHPAKRTQDHNLASPISA) is cleaved from the precursor. 3 cysteine pairs are disulfide-bonded: C55/C68, C56/C61, and C57/C65.

It belongs to the conotoxin M superfamily. Expressed by the venom duct.

The protein localises to the secreted. In terms of biological role, in vivo, elicits a series of symptoms, such as being sedative, tail stiffening and twisted jumping, when injected intracranially into mice. The protein is Conotoxin Vx2 of Conus vexillum (Flag cone).